The sequence spans 409 residues: Lactadherin (409 aa).

2 consecutive EGF-like domains span residues 2–41 (SGDFCDSSLCLNGGTCLLDQDPQKPFHCLCPEGFTGLICN) and 44–88 (EKGP…IHCE). 3 disulfide bridges follow: Cys-6-Cys-17, Cys-11-Cys-29, and Cys-31-Cys-40. N-linked (GlcNAc...) asparagine glycosylation is present at Asn-41. Intrachain disulfides connect Cys-48/Cys-59, Cys-53/Cys-76, Cys-78/Cys-87, Cys-91/Cys-247, Cys-234/Cys-238, and Cys-252/Cys-409. The short motif at 67–69 (RGD) is the Cell attachment site element. 2 consecutive F5/8 type C domains span residues 91 to 247 (CNAP…LLGC) and 252 to 409 (CAEP…LLGC). A glycan (N-linked (GlcNAc...) asparagine) is linked at Asn-372.

As to expression, mammary epithelial cell surfaces and spermatozoan. Also present in testis, epididymis, uterus, adrenal gland, tonsil, muscle, heart, lymphatic gland, thymus and kidney but not spleen, liver, lung or brain.

Its subcellular location is the membrane. The protein resides in the secreted. It is found in the cytoplasmic vesicle. The protein localises to the secretory vesicle. It localises to the acrosome membrane. Functionally, contributes to phagocytic removal of apoptotic cells in many tissues. Plays an important role in the maintenance of intestinal epithelial homeostasis and the promotion of mucosal healing. Promotes VEGF-dependent neovascularization. Specific ligand for the alpha-v/beta-3 and alpha-v/beta-5 receptors. Also binds to phosphatidylserine-enriched cell surfaces in a receptor-independent manner. Zona pellucida-binding protein which may play a role in gamete interaction. This is Lactadherin (MFGE8) from Sus scrofa (Pig).